A 1059-amino-acid chain; its full sequence is Ubiquitin carboxyl-terminal hydrolase 36 (1059 aa).

2 disordered regions span residues 22–45 and 102–145; these read LGGN…NGSL and GKLV…KPKR. A compositionally biased stretch (polar residues) spans 23-45; the sequence is GGNSSAGSSTDQAKSGEDTNGSL. Residues 121 to 138 show a composition bias toward low complexity; it reads HPNNQSHHNHPHPTSNPN. A USP domain is found at 168–457; the sequence is TGMINVGNTC…NAYIMFFELD (290 aa). Residue C177 is the Nucleophile of the active site. The Proton acceptor role is filled by H416. Disordered regions lie at residues 464–512, 554–853, 941–1005, and 1022–1059; these read PPAN…YTNG, ATSA…VTSN, RQRD…FYNQ, and FGGA…QQQT. Composition is skewed to low complexity over residues 479 to 494 and 561 to 580; these read STTP…PSPT and NGNK…KSIN. Phosphoserine is present on residues S490 and S492. Positions 603-615 are enriched in polar residues; sequence TTAQLPSMPNMTE. Phosphothreonine is present on residues T632 and T636. Phosphoserine occurs at positions 646 and 648. Residues 673 to 702 show a composition bias toward polar residues; that stretch reads ESGQTNGHSKTNGSLTNGSASSSVHVNNSK. A compositionally biased stretch (basic and acidic residues) spans 703 to 720; sequence QKTDAIDEIFKSLKKSAD. At S721 the chain carries Phosphoserine. Over residues 721–730 the composition is skewed to acidic residues; it reads SEEDDDEEEP. Residues 740–750 are compositionally biased toward low complexity; the sequence is PQKQSQSQSKA. Residues 751-760 show a composition bias toward pro residues; the sequence is PPSPKTPPSP. S753 bears the Phosphoserine mark. Position 756 is a phosphothreonine (T756). A Phosphoserine modification is found at S759. A compositionally biased stretch (acidic residues) spans 779 to 788; the sequence is DAIDDDDDAV. At T799 the chain carries Phosphothreonine. A compositionally biased stretch (polar residues) spans 806–818; it reads NPFSSSKPSTDSP. Position 817 is a phosphoserine (S817). The residue at position 820 (T820) is a Phosphothreonine. Positions 833–853 are enriched in polar residues; the sequence is ALKSHQQPRVGNGYQSNVTSN. A compositionally biased stretch (low complexity) spans 963-974; it reads SGSAKGNNASNS.

The protein belongs to the peptidase C19 family. As to quaternary structure, interacts with atms/PAF1, but not with CycT.

The protein localises to the nucleus. It localises to the nucleolus. It carries out the reaction Thiol-dependent hydrolysis of ester, thioester, amide, peptide and isopeptide bonds formed by the C-terminal Gly of ubiquitin (a 76-residue protein attached to proteins as an intracellular targeting signal).. Functionally, required for maintaining multiple types of adult stem cells, including male and female germline, epithelial follicle cell and intestinal stem cells. May function as a transcriptional repressor by continually deubiquiting histone H2B at the promoters of genes critical for cellular differentiation, thereby preventing histone H3 'Lys-4' trimethylation (H3K4). Controls selective autophagy activation by ubiquitinated proteins. The chain is Ubiquitin carboxyl-terminal hydrolase 36 (Usp36) from Drosophila sechellia (Fruit fly).